Here is a 157-residue protein sequence, read N- to C-terminus: uncharacterized protein (157 aa).

A disordered region spans residues 1 to 157; it reads MNRGPPLRSR…SFSFLVPSNS (157 aa). Residues 8-31 are compositionally biased toward pro residues; it reads RSRPPSSPPPASAFPGPSPFPSPS. Positions 62 to 71 are enriched in basic residues; the sequence is RTSHPPRCPH. Residues 76–95 show a composition bias toward pro residues; it reads PSAPSPPFTPPHPLPTPTPS. Composition is skewed to low complexity over residues 96 to 117 and 124 to 157; these read SSPR…SLAS and SFSS…PSNS.

This is an uncharacterized protein from Vitis vinifera (Grape).